The chain runs to 1140 residues: Protein FAM184A (1140 aa).

Coiled coils occupy residues 57–256, 296–800, and 868–907; these read ALNT…NKAQ, AILR…IEME, and RITD…LEFK. Residues 1063 to 1128 are disordered; the sequence is PNLSALESGG…EASPVASPDP (66 aa).

The protein belongs to the FAM184 family.

The protein localises to the cytoplasm. The protein resides in the P-body. It localises to the cytoskeleton. It is found in the microtubule organizing center. Its subcellular location is the centrosome. The protein localises to the centriolar satellite. This is Protein FAM184A from Homo sapiens (Human).